The chain runs to 152 residues: MALRMWASSTANALRLSSATRPHYSPLSRCFSSVLDGLKYANSHEWVKHEGSVATVGITDHAQDHLGEVVFVDLPEAGGSVTKATGFGAVESVKATSDVNSPISGEIVEVNSKLSETPGLINSSPYEDGWMIKVKPSNPSELDSLMGAKEYT.

A mitochondrion-targeting transit peptide spans 1–31 (MALRMWASSTANALRLSSATRPHYSPLSRCF). The region spanning 53–135 (VATVGITDHA…YEDGWMIKVK (83 aa)) is the Lipoyl-binding domain. Lys-94 is subject to N6-lipoyllysine.

It belongs to the GcvH family. In terms of assembly, the glycine cleavage system is composed of four proteins: P, T, L and H. (R)-lipoate serves as cofactor.

It localises to the mitochondrion. In terms of biological role, the glycine cleavage system catalyzes the degradation of glycine. The H protein shuttles the methylamine group of glycine from the P protein to the T protein. The polypeptide is Glycine cleavage system H protein, mitochondrial (GDCSH) (Flaveria pubescens (Yellowtops)).